Here is a 451-residue protein sequence, read N- to C-terminus: Phenolic glucoside malonyltransferase 2 (451 aa).

H165 serves as the catalytic Proton acceptor. The short motif at 165–169 (HAVLD) is the HXXXD motif element. Malonyl-CoA-binding positions include H270 and 272–273 (ST). D395 acts as the Proton acceptor in catalysis. The DFGWG motif motif lies at 395-399 (DFGWG).

It belongs to the plant acyltransferase family. Phenolic glucoside malonyltransferase subfamily.

It carries out the reaction a flavonol 7-O-beta-D-glucoside + malonyl-CoA = a flavonol 7-O-(6-O-malonyl-beta-D-glucoside) + CoA. Functionally, malonyltransferase acting on xenobiotic glucosides. Has activity toward 2-Naphthol glucoside (2NAG), 1-Naphthol glucoside (1NAG), kaempferol 7-O-glucoside, hydroxycoumarin glucosides and phenol-glucosides, but not toward kaempferol 3-O-glucoside or daidzin. Prefers phenol glucosides rather than naphtol glucosides. In vivo, seems to be involved in the malonylation of 4-methylumbelliferone glucoside or 4-nitrophenyl glucoside while PMAT1 would be involved in the malonylation of 2-Naphthol glucoside. The sequence is that of Phenolic glucoside malonyltransferase 2 (PMAT2) from Arabidopsis thaliana (Mouse-ear cress).